Consider the following 207-residue polypeptide: Galactoside O-acetyltransferase (207 aa).

An acetyl-CoA-binding site is contributed by N87. The active-site Proton donor/acceptor is the H117. Acetyl-CoA-binding positions include A144, A162, 167-168 (TK), and R185.

The protein belongs to the transferase hexapeptide repeat family. As to quaternary structure, homotrimer.

It localises to the cytoplasm. The enzyme catalyses a beta-D-galactoside + acetyl-CoA = a 6-acetyl-beta-D-galactoside + CoA. This chain is Galactoside O-acetyltransferase (lacA), found in Lactococcus lactis subsp. lactis (strain IL1403) (Streptococcus lactis).